Consider the following 115-residue polypeptide: Macrophage migration inhibitory factor (115 aa).

The Proton acceptor; via imino nitrogen role is filled by Pro-2. 2 residues coordinate substrate: Lys-33 and Ile-65. The residue at position 78 (Lys-78) is an N6-acetyllysine; alternate. Lys-78 bears the N6-succinyllysine; alternate mark. Asn-98 provides a ligand contact to substrate.

Belongs to the MIF family. In terms of assembly, homotrimer. Interacts with CXCR2 extracellular domain. Interacts with the CD74 extracellular domain, USO1, COPS5 and BNIPL.

Its subcellular location is the secreted. The protein localises to the cytoplasm. The catalysed reaction is 3-phenylpyruvate = enol-phenylpyruvate. It catalyses the reaction L-dopachrome = 5,6-dihydroxyindole-2-carboxylate. Its function is as follows. Pro-inflammatory cytokine involved in the innate immune response to bacterial pathogens. The expression of MIF at sites of inflammation suggests a role as mediator in regulating the function of macrophages in host defense. Counteracts the anti-inflammatory activity of glucocorticoids. Has phenylpyruvate tautomerase and dopachrome tautomerase activity (in vitro), but the physiological substrate is not known. It is not clear whether the tautomerase activity has any physiological relevance, and whether it is important for cytokine activity. The polypeptide is Macrophage migration inhibitory factor (Homo sapiens (Human)).